We begin with the raw amino-acid sequence, 342 residues long: MTNSLFRQSFLSDTLNMQQSVEAKATTLSNGVRLQLHQRGVLEVIPANNSAETKNIILSSGIHGDETAPMELIDKIVHDIETGFQDVQARCLFIIAHPEATNAHTRFIEENLNRLFDEKEHQPSKELVIADQLKLLVKAFFDNTPVESRWHLDLHCAIRASKHYSFAISPKTRHPTRSKALVDFVNHSHVEALLLSNSPSSTFSWFSAEYYSAQALTMELGRVARIGENELERFTALDLTMRDLIAEVTPEHLPKPAITYRVSRTIVRLHQDFDFRFDDQVENFTSFMHGEVFGHDGDKPLMAKNDNEAIVFPNRNVAIGQRAALMVCEVKARFEDDQLVYD.

Positions 63, 66, and 155 each coordinate Zn(2+). E219 is a catalytic residue.

It belongs to the AspA/AstE family. Succinylglutamate desuccinylase subfamily. Zn(2+) serves as cofactor.

It catalyses the reaction N-succinyl-L-glutamate + H2O = L-glutamate + succinate. Its pathway is amino-acid degradation; L-arginine degradation via AST pathway; L-glutamate and succinate from L-arginine: step 5/5. Its function is as follows. Transforms N(2)-succinylglutamate into succinate and glutamate. The sequence is that of Succinylglutamate desuccinylase from Vibrio vulnificus (strain CMCP6).